A 427-amino-acid polypeptide reads, in one-letter code: Stemphyloxin II biosynthesis cluster transcription factor sthR (427 aa).

Residues 15-45 constitute a DNA-binding region (zn(2)-C6 fungal-type); it reads CDRCRKQKLRCPPDKDDMGTCGRCLRAGVAC. Residues 51–70 form a disordered region; that stretch reads KPRGRSQKHGISTDGTSHVS. The span at 59–69 shows a compositional bias: polar residues; sequence HGISTDGTSHV.

Its subcellular location is the nucleus. Functionally, transcription factor that regulates the expression of the gene cluster that mediates the biosynthesis of the phytotoxin stemphyloxin II. This is Stemphyloxin II biosynthesis cluster transcription factor sthR from Phaeosphaeria nodorum (strain SN15 / ATCC MYA-4574 / FGSC 10173) (Glume blotch fungus).